The sequence spans 88 residues: Small ribosomal subunit protein uS15 (88 aa).

It belongs to the universal ribosomal protein uS15 family. As to quaternary structure, part of the 30S ribosomal subunit. Forms a bridge to the 50S subunit in the 70S ribosome, contacting the 23S rRNA.

In terms of biological role, one of the primary rRNA binding proteins, it binds directly to 16S rRNA where it helps nucleate assembly of the platform of the 30S subunit by binding and bridging several RNA helices of the 16S rRNA. Its function is as follows. Forms an intersubunit bridge (bridge B4) with the 23S rRNA of the 50S subunit in the ribosome. The polypeptide is Small ribosomal subunit protein uS15 (Verminephrobacter eiseniae (strain EF01-2)).